A 573-amino-acid chain; its full sequence is MRTENTATLNLMWGALILEELARLGVQHVCMAPGSRSTPLTLAAAQQTKLKRHLHFDERGLGFMALGLAKASCAPVAIITTSGTAVANLYPAIVEAWLTHVPLIVLSGDRPPELLGCGANQAIVQPAIFANYAQQVNLPTPDAHIAPQMLLTTLDEAVANQTRPVHINCMYREPLYPSEMSGTILDSESPYLRPLQTWLQHARPYTQYGKSEQLSSPSDDAIMRFVHGKGVIIAGTLTPEQDPQQLIALSQKIGWPLLTDAQSQLRQHPAAIGNIDQLLQHPKARNLLQEADRVLVFGGRLLSKRLIAYLAEQNWHSYWQVLPQQDRLDPSHNAKHIWHANAAQFAQLNWYRSSSANWANTLVTYNDELHSLFVRNIDQGEFGEAQVIRAIANTRPLEQQLFIGNSLPVRLYDMYAPVSCCTATTYTNRGASGIDGLLATACGIAAHQGKPTSLIIGDLSQLHDLNSFAIARSLTSPLVIIILNNDGGNIFNLLPVPNEELRSDYYRLSHGLEFGYAAAMFNLPYNQVDNLADFQSCYHEALDYQGASVIEVSVSQHQASEQIAALNLWVKQS.

Belongs to the TPP enzyme family. MenD subfamily. In terms of assembly, homodimer. Mg(2+) is required as a cofactor. Requires Mn(2+) as cofactor. It depends on thiamine diphosphate as a cofactor.

The catalysed reaction is isochorismate + 2-oxoglutarate + H(+) = 5-enolpyruvoyl-6-hydroxy-2-succinyl-cyclohex-3-ene-1-carboxylate + CO2. Its pathway is quinol/quinone metabolism; 1,4-dihydroxy-2-naphthoate biosynthesis; 1,4-dihydroxy-2-naphthoate from chorismate: step 2/7. It functions in the pathway quinol/quinone metabolism; menaquinone biosynthesis. Its function is as follows. Catalyzes the thiamine diphosphate-dependent decarboxylation of 2-oxoglutarate and the subsequent addition of the resulting succinic semialdehyde-thiamine pyrophosphate anion to isochorismate to yield 2-succinyl-5-enolpyruvyl-6-hydroxy-3-cyclohexene-1-carboxylate (SEPHCHC). The sequence is that of 2-succinyl-5-enolpyruvyl-6-hydroxy-3-cyclohexene-1-carboxylate synthase from Shewanella sp. (strain MR-4).